A 254-amino-acid chain; its full sequence is Bowman-Birk type bran trypsin inhibitor (254 aa).

The signal sequence occupies residues 1-22; it reads MSNTTMATSTILLFLLAGLAAA. Residues 23–118 constitute a propeptide that is removed on maturation; the sequence is HGDGDTTIRL…KCTAALDGLS (96 aa). 3 consecutive repeats follow at residues 46–120, 121–187, and 188–251; these read KPWD…LSME, RPWK…FCTP, and RPWG…CKPR. 9 cysteine pairs are disulfide-bonded: Cys-125–Cys-185, Cys-126–Cys-143, Cys-152–Cys-159, Cys-156–Cys-172, Cys-193–Cys-248, Cys-194–Cys-209, Cys-199–Cys-207, Cys-216–Cys-223, and Cys-220–Cys-236. A propeptide spanning residues 252-254 is cleaved from the precursor; that stretch reads AEN.

This sequence belongs to the Bowman-Birk serine protease inhibitor family.

The chain is Bowman-Birk type bran trypsin inhibitor (RBBI3.3) from Oryza sativa subsp. japonica (Rice).